A 350-amino-acid polypeptide reads, in one-letter code: MGENLFVGMAKGLRTWLESQHFVPLVTDVFLMLLAVVGVLAFLFLNALFLIYYDRKFGAWVQARLGPNRVGPRGIFQTVADTVKLFAKEIFIPNNVDRWPYLLAPVLIFTIPVMLFLVIPFGKGMVPYDLNLGVLYLVAITSVETIVLWMAGWSSNNKYSLLGAMRSVAQMLSYEMPVILAMLSVVMMAGSMKLSDIVAAQQKVWFIFLQPVGFLIYFIAVNAEFKRTPFDLVEGESEIISGPYTEYSGMNFALFFLAEYTNFMIGAIMVTTLFLGGWNAPFGWTFIPSWLWFIIKMYFVITLYMWTRWTFLRIRIDQMLNFAWKFLLPVSLANIFITGFGLYLYRMIRW.

A run of 8 helical transmembrane segments spans residues Leu-31–Ile-51, Leu-102–Gly-122, Leu-132–Gly-152, Met-171–Ser-191, Trp-205–Phe-225, Phe-263–Gly-283, Phe-286–Trp-306, and Phe-322–Leu-342.

It belongs to the complex I subunit 1 family. NDH-1 is composed of 14 different subunits. Subunits NuoA, H, J, K, L, M, N constitute the membrane sector of the complex.

It localises to the cell membrane. It carries out the reaction a quinone + NADH + 5 H(+)(in) = a quinol + NAD(+) + 4 H(+)(out). NDH-1 shuttles electrons from NADH, via FMN and iron-sulfur (Fe-S) centers, to quinones in the respiratory chain. The immediate electron acceptor for the enzyme in this species is believed to be ubiquinone. Couples the redox reaction to proton translocation (for every two electrons transferred, four hydrogen ions are translocated across the cytoplasmic membrane), and thus conserves the redox energy in a proton gradient. This subunit may bind ubiquinone. The polypeptide is NADH-quinone oxidoreductase subunit H (Carboxydothermus hydrogenoformans (strain ATCC BAA-161 / DSM 6008 / Z-2901)).